The sequence spans 245 residues: 2,3-bisphosphoglycerate-dependent phosphoglycerate mutase (245 aa).

Residues 8–15, 21–22, R60, 87–90, K98, 114–115, and 183–184 each bind substrate; these read RHGQSLWN, TG, ERHY, RR, and GN. The active-site Tele-phosphohistidine intermediate is H9. The active-site Proton donor/acceptor is E87.

It belongs to the phosphoglycerate mutase family. BPG-dependent PGAM subfamily.

The catalysed reaction is (2R)-2-phosphoglycerate = (2R)-3-phosphoglycerate. It functions in the pathway carbohydrate degradation; glycolysis; pyruvate from D-glyceraldehyde 3-phosphate: step 3/5. Catalyzes the interconversion of 2-phosphoglycerate and 3-phosphoglycerate. The chain is 2,3-bisphosphoglycerate-dependent phosphoglycerate mutase from Bacillus anthracis (strain A0248).